Reading from the N-terminus, the 156-residue chain is Ecotin (156 aa).

The signal sequence occupies residues 1 to 19 (MKALLIAAGVAALSSTAMA). C65 and C102 form a disulfide bridge.

This sequence belongs to the protease inhibitor I11 (ecotin) family. Homodimer.

The protein resides in the periplasm. Its function is as follows. General inhibitor of family S1 serine proteases. The polypeptide is Ecotin (Pseudomonas aeruginosa (strain ATCC 15692 / DSM 22644 / CIP 104116 / JCM 14847 / LMG 12228 / 1C / PRS 101 / PAO1)).